The following is a 479-amino-acid chain: Ribosomal RNA small subunit methyltransferase F (479 aa).

S-adenosyl-L-methionine contacts are provided by residues 125-131 (AAAPGSK), E149, G177, and D194. C247 serves as the catalytic Nucleophile.

Belongs to the class I-like SAM-binding methyltransferase superfamily. RsmB/NOP family.

The protein resides in the cytoplasm. It carries out the reaction cytidine(1407) in 16S rRNA + S-adenosyl-L-methionine = 5-methylcytidine(1407) in 16S rRNA + S-adenosyl-L-homocysteine + H(+). Functionally, specifically methylates the cytosine at position 1407 (m5C1407) of 16S rRNA. The sequence is that of Ribosomal RNA small subunit methyltransferase F from Shigella flexneri serotype 5b (strain 8401).